The sequence spans 515 residues: Bifunctional purine biosynthesis protein PurH (515 aa).

The 145-residue stretch at 1 to 145 folds into the MGS-like domain; that stretch reads MTKRALISVS…KNHASVTVVV (145 aa).

The protein belongs to the PurH family.

It carries out the reaction (6R)-10-formyltetrahydrofolate + 5-amino-1-(5-phospho-beta-D-ribosyl)imidazole-4-carboxamide = 5-formamido-1-(5-phospho-D-ribosyl)imidazole-4-carboxamide + (6S)-5,6,7,8-tetrahydrofolate. It catalyses the reaction IMP + H2O = 5-formamido-1-(5-phospho-D-ribosyl)imidazole-4-carboxamide. It participates in purine metabolism; IMP biosynthesis via de novo pathway; 5-formamido-1-(5-phospho-D-ribosyl)imidazole-4-carboxamide from 5-amino-1-(5-phospho-D-ribosyl)imidazole-4-carboxamide (10-formyl THF route): step 1/1. It functions in the pathway purine metabolism; IMP biosynthesis via de novo pathway; IMP from 5-formamido-1-(5-phospho-D-ribosyl)imidazole-4-carboxamide: step 1/1. This is Bifunctional purine biosynthesis protein PurH from Streptococcus gordonii (strain Challis / ATCC 35105 / BCRC 15272 / CH1 / DL1 / V288).